The following is a 730-amino-acid chain: Pentatricopeptide repeat-containing protein At5g64320, mitochondrial (730 aa).

A mitochondrion-targeting transit peptide spans 1–18 (MVMLARSKLALDVSRRSQ). PPR repeat units follow at residues 110–144 (SFDVYQVLIGKLGANGEFKTIDRLLIQMKDEGIVF), 145–175 (KESLFISIMRDYDKAGFPGQTTRLMLEMRNV), 181–215 (TFKSYNVVLEILVSGNCHKVAANVFYDMLSRKIPP), 216–250 (TLFTFGVVMKAFCAVNEIDSALSLLRDMTKHGCVP), 251–285 (NSVIYQTLIHSLSKCNRVNEALQLLEEMFLMGCVP), 286–320 (DAETFNDVILGLCKFDRINEAAKMVNRMLIRGFAP), 321–351 (DDITYGYLMNGLCKIGRVDAAKDLFYRIPKP), 352–387 (EIVIFNTLIHGFVTHGRLDDAKAVLSDMVTSYGIVP), 388–422 (DVCTYNSLIYGYWKEGLVGLALEVLHDMRNKGCKP), 423–457 (NVYSYTILVDGFCKLGKIDEAYNVLNEMSADGLKP), 458–492 (NTVGFNCLISAFCKEHRIPEAVEIFREMPRKGCKP), 493–527 (DVYTFNSLISGLCEVDEIKHALWLLRDMISEGVVA), 528–562 (NTVTYNTLINAFLRRGEIKEARKLVNEMVFQGSPL), 563–597 (DEITYNSLIKGLCRAGEVDKARSLFEKMLRDGHAP), 598–632 (SNISCNILINGLCRSGMVEEAVEFQKEMVLRGSTP), 633–667 (DIVTFNSLINGLCRAGRIEDGLTMFRKLQAEGIPP), and 668–702 (DTVTFNTLMSWLCKGGFVYDACLLLDEGIEDGFVP).

This sequence belongs to the PPR family. P subfamily.

The protein resides in the mitochondrion. The protein is Pentatricopeptide repeat-containing protein At5g64320, mitochondrial of Arabidopsis thaliana (Mouse-ear cress).